We begin with the raw amino-acid sequence, 913 residues long: Pentatricopeptide repeat-containing protein At1g10270 (913 aa).

The tract at residues 34–138 (SLSPANEDPE…PNAPRLPDST (105 aa)) is disordered. Residues 64-73 (DPSQFQIPQN) are compositionally biased toward polar residues. Residues 74-84 (HTPPIPYPPIP) are compositionally biased toward pro residues. The short motif at 99–108 (ERRRRKRRLR) is the Nuclear localization signal element. Residues 108–130 (RIEPPLHALRRDPSAPPPKRDPN) show a composition bias toward basic and acidic residues. The segment at 134–167 (LPDSTSALVGQRLNLHNRVQSLIRASDLDAASKL) is leucine-zipper. 11 PPR repeats span residues 179–214 (TVFT…NIVP), 215–250 (NVVS…PFAP), 251–285 (SSVT…GQAA), 286–316 (DSTV…LKSK), 321–355 (DGIV…KFRM), 356–390 (HPPT…HAPP), 396–426 (NSDT…VGSK), 435–469 (DYLG…SLPA), 470–504 (DAPS…NLRV), 505–539 (VADF…EPKP), and 540–574 (DPSI…NVGV). Residues 607 to 913 (RNAGQSGNTP…QEKKVVELRN (307 aa)) are disordered. Over residues 639 to 649 (WTSQGVVHSNS) the composition is skewed to polar residues. Composition is skewed to low complexity over residues 650–666 (GWAN…AYKA) and 673–690 (SWSN…SNQT). A 14 X 11 AA approximate tandem repeats of W-x(2)-Q-x(4)-Q-x(2) region spans residues 674–858 (WSNTSDNQQQ…TAQQQWSNQT (185 aa)). The segment covering 691–700 (AGQQPPSWSR) has biased composition (polar residues). Positions 706 to 727 (QQQQSWSQQSGWSSPSGHQQSW) are enriched in low complexity. Over residues 728-761 (TNQTAGQQQPWANQTPGQQQQWANQTPGQQQQLA) the composition is skewed to polar residues. The segment covering 762–791 (NQTPGQQQQWANQTPGQQQQWANQNNGHQQ) has biased composition (low complexity). Residues 792-814 (PWANQNTGHQQSWANQTPSQQQP) show a composition bias toward polar residues. The segment covering 815-845 (WANQTTGQQQGWGNQTTGQQQQWANQTAGQQ) has biased composition (low complexity). Polar residues-rich tracts occupy residues 846–867 (SGWT…SQWL) and 875–894 (ANQT…QQEP). The segment covering 899-913 (ECQETQEKKVVELRN) has biased composition (basic and acidic residues).

This sequence belongs to the PPR family. P subfamily. Interacts with RPB36B through its WQQ domain. As to expression, ubiquitous but preferentially expressed in gametophytes and young embryos.

The protein localises to the nucleus. May function as a transcriptional regulator essential for early embryogenesis. The protein is Pentatricopeptide repeat-containing protein At1g10270 (GRP23) of Arabidopsis thaliana (Mouse-ear cress).